A 65-amino-acid polypeptide reads, in one-letter code: U15-hexatoxin-Mg1a (65 aa).

Contains 4 disulfide bonds. Expressed by the venom gland.

Its subcellular location is the secreted. Intrathorax injection into crickets causes paralysis prolonged for more than 60 minutes, followed by recovery. The polypeptide is U15-hexatoxin-Mg1a (Macrothele gigas (Japanese funnel web spider)).